The chain runs to 85 residues: MGERYNIHSQLEHLQSKYIGTGHADTTKFEWLTNQHRDSLASYMGHYDILNYFAIAENESKARVRFNLMERMLQPCGPPPEKLED.

Belongs to the SF3B5 family. In terms of assembly, component of the SF3B complex. SF3B complex associates with the splicing factor SF3A complex and a 12S RNA unit to form the U2 small nuclear ribonucleoproteins complex (U2 snRNP). Identified in the SAGA transcription regulatory histone acetylation (HAT) complex; the interaction is RNA-independent.

The protein resides in the nucleus. In terms of biological role, involved in pre-mRNA splicing as component of spliceosome. As part of the spliceosome complex, plays a role in the regulation of spermatogonial differentiation. When associated with the SAGA transcription regulatory histone acetylation (HAT) complex, might be involved in the transcriptional activation of a subset of SAGA-regulated genes. This chain is Splicing factor 3B subunit 5, found in Drosophila melanogaster (Fruit fly).